A 147-amino-acid chain; its full sequence is Nucleoside diphosphate kinase (147 aa).

Residues Lys-9, Phe-57, Arg-85, Thr-91, Arg-102, and Asn-112 each coordinate ATP. Residue Thr-91 is modified to Phosphothreonine. Residue His-115 is the Pros-phosphohistidine intermediate of the active site. Ser-122 is subject to Phosphoserine.

Belongs to the NDK family. Homotetramer. It depends on Mg(2+) as a cofactor.

Its subcellular location is the cytoplasm. It carries out the reaction a 2'-deoxyribonucleoside 5'-diphosphate + ATP = a 2'-deoxyribonucleoside 5'-triphosphate + ADP. The enzyme catalyses a ribonucleoside 5'-diphosphate + ATP = a ribonucleoside 5'-triphosphate + ADP. In terms of biological role, major role in the synthesis of nucleoside triphosphates other than ATP. The ATP gamma phosphate is transferred to the NDP beta phosphate via a ping-pong mechanism, using a phosphorylated active-site intermediate. The sequence is that of Nucleoside diphosphate kinase from Halalkalibacterium halodurans (strain ATCC BAA-125 / DSM 18197 / FERM 7344 / JCM 9153 / C-125) (Bacillus halodurans).